The primary structure comprises 572 residues: Phenylalanine--tRNA ligase beta subunit (572 aa).

In terms of domain architecture, B5 spans 278-353 (LTPKEFEVEF…IAYGYNEIKP (76 aa)). Mg(2+) is bound by residues Asp-331, Asp-337, Glu-340, and Asp-341.

This sequence belongs to the phenylalanyl-tRNA synthetase beta subunit family. Type 2 subfamily. Tetramer of two alpha and two beta subunits. Requires Mg(2+) as cofactor.

It localises to the cytoplasm. It carries out the reaction tRNA(Phe) + L-phenylalanine + ATP = L-phenylalanyl-tRNA(Phe) + AMP + diphosphate + H(+). This is Phenylalanine--tRNA ligase beta subunit from Thermococcus onnurineus (strain NA1).